Consider the following 507-residue polypeptide: uncharacterized protein (507 aa).

14 helical membrane passes run 8 to 28, 41 to 61, 86 to 106, 130 to 150, 171 to 191, 193 to 213, 235 to 255, 275 to 295, 323 to 343, 355 to 375, 387 to 407, 408 to 428, 444 to 464, and 467 to 487; these read VKGV…AYLV, VGLF…RAFG, IVFV…LVVI, INIL…VAFF, ILSV…HNAY, PSVS…YIVV, LFSY…LGYL, VAMP…AVLF, IIVT…INIL, IQIL…FNIL, ILYI…PKFG, IIGA…FQIW, ILVI…KDLI, and VILQ…LGIF.

Belongs to the polysaccharide synthase family.

The protein resides in the cell membrane. This is an uncharacterized protein from Methanocaldococcus jannaschii (strain ATCC 43067 / DSM 2661 / JAL-1 / JCM 10045 / NBRC 100440) (Methanococcus jannaschii).